The sequence spans 365 residues: Holliday junction branch migration complex subunit RuvB (365 aa).

Residues 1–191 (MSPELGGGYD…FGFTAHMDFY (191 aa)) form a large ATPase domain (RuvB-L) region. ATP contacts are provided by residues leucine 30, arginine 31, glycine 72, lysine 75, threonine 76, serine 77, 138 to 140 (EDF), arginine 181, tyrosine 191, and arginine 228. Residue threonine 76 coordinates Mg(2+). Residues 192–262 (EPAELKQILM…IAHAALAVYD (71 aa)) are small ATPAse domain (RuvB-S). The interval 265–365 (QLGLDRLDRS…QASLFDPEDP (101 aa)) is head domain (RuvB-H). DNA contacts are provided by arginine 320 and arginine 325.

The protein belongs to the RuvB family. As to quaternary structure, homohexamer. Forms an RuvA(8)-RuvB(12)-Holliday junction (HJ) complex. HJ DNA is sandwiched between 2 RuvA tetramers; dsDNA enters through RuvA and exits via RuvB. An RuvB hexamer assembles on each DNA strand where it exits the tetramer. Each RuvB hexamer is contacted by two RuvA subunits (via domain III) on 2 adjacent RuvB subunits; this complex drives branch migration. In the full resolvosome a probable DNA-RuvA(4)-RuvB(12)-RuvC(2) complex forms which resolves the HJ.

Its subcellular location is the cytoplasm. It carries out the reaction ATP + H2O = ADP + phosphate + H(+). The RuvA-RuvB-RuvC complex processes Holliday junction (HJ) DNA during genetic recombination and DNA repair, while the RuvA-RuvB complex plays an important role in the rescue of blocked DNA replication forks via replication fork reversal (RFR). RuvA specifically binds to HJ cruciform DNA, conferring on it an open structure. The RuvB hexamer acts as an ATP-dependent pump, pulling dsDNA into and through the RuvAB complex. RuvB forms 2 homohexamers on either side of HJ DNA bound by 1 or 2 RuvA tetramers; 4 subunits per hexamer contact DNA at a time. Coordinated motions by a converter formed by DNA-disengaged RuvB subunits stimulates ATP hydrolysis and nucleotide exchange. Immobilization of the converter enables RuvB to convert the ATP-contained energy into a lever motion, pulling 2 nucleotides of DNA out of the RuvA tetramer per ATP hydrolyzed, thus driving DNA branch migration. The RuvB motors rotate together with the DNA substrate, which together with the progressing nucleotide cycle form the mechanistic basis for DNA recombination by continuous HJ branch migration. Branch migration allows RuvC to scan DNA until it finds its consensus sequence, where it cleaves and resolves cruciform DNA. This is Holliday junction branch migration complex subunit RuvB from Rhodococcus opacus (strain B4).